The primary structure comprises 274 residues: Single-stranded DNA-binding protein WHY1, chloroplastic (274 aa).

The N-terminal 54 residues, 1–54 (MSNFSLSPSPTSGFSLNLQNPTKTSYLSFSSSINTIFAPLSSNTTKSFSGLTHK), are a transit peptide targeting the chloroplast. A required for ssDNA binding region spans residues 100-105 (KGKAAL). Positions 178-191 (KGRSDEGRVRKVLK) match the Nuclear localization signal motif. The interval 253-274 (PEDASRSNNANPRSGAELEWNR) is disordered.

It belongs to the Whirly family. As to quaternary structure, homotetramer.

It is found in the nucleus. The protein resides in the plastid. Its subcellular location is the chloroplast. Its function is as follows. Single-stranded DNA-binding protein that acts as a transcriptional activator of the pathogenesis-related gene PR-10a. Upon elicitation, binds a 30bp promoter sequence known as elicitor element response (ERE) and is required for PR-10a expression. This chain is Single-stranded DNA-binding protein WHY1, chloroplastic (WHY1), found in Solanum tuberosum (Potato).